Consider the following 983-residue polypeptide: Bifunctional glutamine synthetase adenylyltransferase/adenylyl-removing enzyme (983 aa).

The interval 1-490 (MDRKSSVTID…AHGQVFYSPV (490 aa)) is adenylyl removase. Positions 496–983 (RIPTQDLRMS…RVVDAVFWNQ (488 aa)) are adenylyl transferase.

It belongs to the GlnE family. Mg(2+) serves as cofactor.

It catalyses the reaction [glutamine synthetase]-O(4)-(5'-adenylyl)-L-tyrosine + phosphate = [glutamine synthetase]-L-tyrosine + ADP. The enzyme catalyses [glutamine synthetase]-L-tyrosine + ATP = [glutamine synthetase]-O(4)-(5'-adenylyl)-L-tyrosine + diphosphate. In terms of biological role, involved in the regulation of glutamine synthetase GlnA, a key enzyme in the process to assimilate ammonia. When cellular nitrogen levels are high, the C-terminal adenylyl transferase (AT) inactivates GlnA by covalent transfer of an adenylyl group from ATP to specific tyrosine residue of GlnA, thus reducing its activity. Conversely, when nitrogen levels are low, the N-terminal adenylyl removase (AR) activates GlnA by removing the adenylyl group by phosphorolysis, increasing its activity. The regulatory region of GlnE binds the signal transduction protein PII (GlnB) which indicates the nitrogen status of the cell. The polypeptide is Bifunctional glutamine synthetase adenylyltransferase/adenylyl-removing enzyme (Cutibacterium acnes (strain DSM 16379 / KPA171202) (Propionibacterium acnes)).